Here is a 265-residue protein sequence, read N- to C-terminus: GTP cyclohydrolase FolE2 (265 aa).

It belongs to the GTP cyclohydrolase IV family.

The enzyme catalyses GTP + H2O = 7,8-dihydroneopterin 3'-triphosphate + formate + H(+). It participates in cofactor biosynthesis; 7,8-dihydroneopterin triphosphate biosynthesis; 7,8-dihydroneopterin triphosphate from GTP: step 1/1. Functionally, converts GTP to 7,8-dihydroneopterin triphosphate. The polypeptide is GTP cyclohydrolase FolE2 (Bordetella bronchiseptica (strain ATCC BAA-588 / NCTC 13252 / RB50) (Alcaligenes bronchisepticus)).